Consider the following 234-residue polypeptide: Peptidase E (234 aa).

Catalysis depends on charge relay system residues Ser123, Asp138, and His160.

It belongs to the peptidase S51 family.

Its subcellular location is the cytoplasm. The catalysed reaction is Dipeptidase E catalyzes the hydrolysis of dipeptides Asp-|-Xaa. It does not act on peptides with N-terminal Glu, Asn or Gln, nor does it cleave isoaspartyl peptides.. Functionally, hydrolyzes dipeptides containing N-terminal aspartate residues. May play a role in allowing the cell to use peptide aspartate to spare carbon otherwise required for the synthesis of the aspartate family of amino acids. In Actinobacillus pleuropneumoniae serotype 7 (strain AP76), this protein is Peptidase E.